The following is a 113-amino-acid chain: Protein S100-A9 (113 aa).

Residue Ala-2 is modified to N-acetylalanine. EF-hand domains lie at 13–48 (ISTIINVFHQYSRKYGHPDTLNKAEFKEMVNKDLPN) and 55–90 (RNENLLRDIMEDLDTNQDNQLSFEECMMLMGKLIFA). A Zn(2+)-binding site is contributed by His-21. Ser-24 and His-29 together coordinate Ca(2+). Asp-31 provides a ligand contact to Zn(2+). Ca(2+) contacts are provided by Thr-32, Glu-37, Asp-68, Asn-70, Asp-72, Gln-74, and Glu-79. His-92 and His-96 together coordinate Zn(2+). The residue at position 107 (His-107) is a Pros-methylhistidine.

In terms of assembly, homodimer. Preferentially exists as a heterodimer or heterotetramer with S100A8 known as calprotectin (S100A8/A9). S100A9 interacts with ATP2A2. S100A9 interacts with AGER, and with the heterodimeric complex formed by TLR4 and LY96 in the presence of calcium and/or zinc ions. S100A9 binds quinoline-3-carboxamides in the presence of calcium and/or zinc ions. S100A9 interacts with amyloid-beta protein 40. Calprotectin (S100A8/9) interacts with CEACAM3 and tubulin filaments in a calcium-dependent manner. Heterotetrameric calprotectin (S100A8/A9) interacts with ANXA6 and associates with tubulin filaments in activated monocytes. Calprotectin (S100A8/9) interacts with NCF2/P67PHOX, RAC1, RAC2, CYBA and CYBB. Calprotectin (S100A8/9) interacts with NOS2 to form the iNOS-S100A8/A9 transnitrosylase complex; induced by LDL(ox). Calprotectin (S100A8/9) interacts with CD69. In terms of processing, phosphorylated. Phosphorylation inhibits activation of tubulin polymerization. Methylation at His-107 by METTL9 reduces zinc-binding without affecting heterodimerization with S100A8. In terms of tissue distribution, highly expressed at sites of inflammation.

It localises to the secreted. The protein localises to the cytoplasm. The protein resides in the cytoskeleton. It is found in the cell membrane. Its function is as follows. S100A9 is a calcium- and zinc-binding protein which plays a prominent role in the regulation of inflammatory processes and immune response. It can induce neutrophil chemotaxis, adhesion, can increase the bactericidal activity of neutrophils by promoting phagocytosis via activation of SYK, PI3K/AKT, and ERK1/2 and can induce degranulation of neutrophils by a MAPK-dependent mechanism. Predominantly found as calprotectin (S100A8/A9) which has a wide plethora of intra- and extracellular functions. The intracellular functions include: facilitating leukocyte arachidonic acid trafficking and metabolism, modulation of the tubulin-dependent cytoskeleton during migration of phagocytes and activation of the neutrophilic NADPH-oxidase. Also participates in regulatory T-cell differentiation together with CD69. Activates NADPH-oxidase by facilitating the enzyme complex assembly at the cell membrane, transferring arachidonic acid, an essential cofactor, to the enzyme complex and S100A8 contributes to the enzyme assembly by directly binding to NCF2/P67PHOX. The extracellular functions involve pro-inflammatory, antimicrobial, oxidant-scavenging and apoptosis-inducing activities. Its pro-inflammatory activity includes recruitment of leukocytes, promotion of cytokine and chemokine production, and regulation of leukocyte adhesion and migration. Acts as an alarmin or a danger associated molecular pattern (DAMP) molecule and stimulates innate immune cells via binding to pattern recognition receptors such as Toll-like receptor 4 (TLR4) and receptor for advanced glycation endproducts (AGER). Binding to TLR4 and AGER activates the MAP-kinase and NF-kappa-B signaling pathways resulting in the amplification of the pro-inflammatory cascade. Has antimicrobial activity towards bacteria and fungi and exerts its antimicrobial activity probably via chelation of Zn(2+) which is essential for microbial growth. Can induce cell death via autophagy and apoptosis and this occurs through the cross-talk of mitochondria and lysosomes via reactive oxygen species (ROS) and the process involves BNIP3. Can regulate neutrophil number and apoptosis by an anti-apoptotic effect; regulates cell survival via ITGAM/ITGB and TLR4 and a signaling mechanism involving MEK-ERK. Its role as an oxidant scavenger has a protective role in preventing exaggerated tissue damage by scavenging oxidants. The iNOS-S100A8/A9 transnitrosylase complex is proposed to direct selective inflammatory stimulus-dependent S-nitrosylation of multiple targets such as GAPDH, NXA5, EZR, MSN and VIM by recognizing a [IL]-x-C-x-x-[DE] motif. This Rattus norvegicus (Rat) protein is Protein S100-A9 (S100a9).